A 429-amino-acid chain; its full sequence is Glutamate-1-semialdehyde 2,1-aminomutase 2 (429 aa).

At Lys268 the chain carries N6-(pyridoxal phosphate)lysine.

This sequence belongs to the class-III pyridoxal-phosphate-dependent aminotransferase family. HemL subfamily. Homodimer. The cofactor is pyridoxal 5'-phosphate.

The protein localises to the cytoplasm. It catalyses the reaction (S)-4-amino-5-oxopentanoate = 5-aminolevulinate. Its pathway is porphyrin-containing compound metabolism; protoporphyrin-IX biosynthesis; 5-aminolevulinate from L-glutamyl-tRNA(Glu): step 2/2. The sequence is that of Glutamate-1-semialdehyde 2,1-aminomutase 2 from Bacillus cereus (strain ATCC 10987 / NRS 248).